Reading from the N-terminus, the 201-residue chain is Protein S40-5 (201 aa).

Disordered regions lie at residues 1-39 and 134-178; these read MARGRKLTMSQSERYLGSSYSYGDSNGNSATDESELTEE and SIHE…EGVG. Over residues 17 to 29 the composition is skewed to low complexity; the sequence is GSSYSYGDSNGNS.

This sequence belongs to the senescence regulator S40 family.

It localises to the cytoplasm. The chain is Protein S40-5 from Arabidopsis thaliana (Mouse-ear cress).